Here is a 173-residue protein sequence, read N- to C-terminus: Flagellar assembly factor FliW (173 aa).

The tract at residues serine 152–glutamate 173 is disordered.

The protein belongs to the FliW family. As to quaternary structure, interacts with translational regulator CsrA and flagellin(s).

It localises to the cytoplasm. In terms of biological role, acts as an anti-CsrA protein, binds CsrA and prevents it from repressing translation of its target genes, one of which is flagellin. Binds to flagellin and participates in the assembly of the flagellum. The protein is Flagellar assembly factor FliW of Nitratidesulfovibrio vulgaris (strain ATCC 29579 / DSM 644 / CCUG 34227 / NCIMB 8303 / VKM B-1760 / Hildenborough) (Desulfovibrio vulgaris).